A 69-amino-acid polypeptide reads, in one-letter code: Large ribosomal subunit protein uL29 (69 aa).

This sequence belongs to the universal ribosomal protein uL29 family.

The chain is Large ribosomal subunit protein uL29 from Rhodopseudomonas palustris (strain BisB5).